Reading from the N-terminus, the 338-residue chain is E3 ubiquitin-protein ligase SPL1 (338 aa).

A helical membrane pass occupies residues 1–21 (MIHLAGFTCCLGGVALYLLTR). Residues 22–223 (STGRDIKSIT…KLGDLSRRFK (202 aa)) are Chloroplast intermembrane-facing. A helical transmembrane segment spans residues 224 to 246 (YASMGLTVLGVILISKPVIEYIL). Topologically, residues 247–338 (KRIEDTLERR…IQQVLKIYRH (92 aa)) are cytoplasmic. The RING-type zinc finger occupies 291-326 (CVVCLDQKYNTAFVECGHMCCCTPCSLQLRTCPLCR).

It localises to the plastid. The protein resides in the chloroplast outer membrane. It carries out the reaction S-ubiquitinyl-[E2 ubiquitin-conjugating enzyme]-L-cysteine + [acceptor protein]-L-lysine = [E2 ubiquitin-conjugating enzyme]-L-cysteine + N(6)-ubiquitinyl-[acceptor protein]-L-lysine.. Its pathway is protein modification; protein ubiquitination. Possesses E3 ubiquitin-protein ligase activity. This Arabidopsis thaliana (Mouse-ear cress) protein is E3 ubiquitin-protein ligase SPL1.